The primary structure comprises 162 residues: Early E1A 18 kDa protein (162 aa).

Positions 134-162 (EEPTEGVAENSLKRQADSSLCSSSPKRFC) are disordered. Residues 150–162 (DSSLCSSSPKRFC) show a composition bias toward polar residues.

The protein is Early E1A 18 kDa protein of Tree shrew adenovirus serotype 1 (TSAdV-1).